Here is a 1157-residue protein sequence, read N- to C-terminus: Folliculin-interacting protein 1 (1157 aa).

The uDENN FNIP1/2-type domain occupies 37–467 (FDPSQIRLIV…TVMPNGQPPI (431 aa)). Disordered stretches follow at residues 92–120 (PGGD…CPKY), 616–665 (SQQE…TKVE), 769–796 (SPPT…NRDC), and 904–955 (VPHG…NYYG). Low complexity predominate over residues 95-111 (DSSSSLDSSINSSSSFS). The region spanning 475–1083 (SSQSVDMLAK…VSNLLHSTLQ (609 aa)) is the cDENN FNIP1/2-type domain. Basic and acidic residues predominate over residues 651-664 (ADGHQPRTCQDTKV). Over residues 904–916 (VPHGDRENAEKKV) the composition is skewed to basic and acidic residues. Residues 1093-1148 (FCVMHLEDRLQELYFKSKMLSEYLKGQMRVHVKELGVVLGIESSDLPLLAAVASTH) enclose the dDENN FNIP1/2-type domain.

It belongs to the FNIP family. Homodimer and homomultimer. Heterodimer and heteromultimer with FNIP2. Component of the lysosomal folliculin complex (LFC).

The protein localises to the lysosome membrane. It is found in the cytoplasm. It localises to the cytosol. Functionally, binding partner of the GTPase-activating protein FLCN: involved in the cellular response to amino acid availability by regulating the non-canonical mTORC1 signaling cascade controlling the MiT/TFE factors TFEB and TFE3. Required to promote FLCN recruitment to lysosomes and interaction with Rag GTPases, leading to activation of the non-canonical mTORC1 signaling. In low-amino acid conditions, component of the lysosomal folliculin complex (LFC) on the membrane of lysosomes, which inhibits the GTPase-activating activity of FLCN, thereby inactivating mTORC1 and promoting nuclear translocation of TFEB and TFE3. Upon amino acid restimulation, disassembly of the LFC complex liberates the GTPase-activating activity of FLCN, leading to activation of mTORC1 and subsequent inactivation of TFEB and TFE3. In addition to its role in mTORC1 signaling, also acts as a co-chaperone of HSP90AA1/Hsp90: inhibits the ATPase activity of HSP90AA1/Hsp90, leading to activate both kinase and non-kinase client proteins of HSP90AA1/Hsp90. Acts as a scaffold to load client protein FLCN onto HSP90AA1/Hsp90. This Gallus gallus (Chicken) protein is Folliculin-interacting protein 1.